A 132-amino-acid polypeptide reads, in one-letter code: Small ribosomal subunit protein uS8 (132 aa).

It belongs to the universal ribosomal protein uS8 family. In terms of assembly, part of the 30S ribosomal subunit. Contacts proteins S5 and S12.

One of the primary rRNA binding proteins, it binds directly to 16S rRNA central domain where it helps coordinate assembly of the platform of the 30S subunit. In Mycobacterium avium (strain 104), this protein is Small ribosomal subunit protein uS8.